The sequence spans 338 residues: Glyceraldehyde-3-phosphate dehydrogenase (338 aa).

Residues 12-13, Asp-34, and Arg-79 contribute to the NAD(+) site; that span reads RI. Residues 150–152, Thr-181, 210–211, and Arg-233 contribute to the D-glyceraldehyde 3-phosphate site; these read SCT and TG. The Nucleophile role is filled by Cys-151. An NAD(+)-binding site is contributed by Asn-315.

This sequence belongs to the glyceraldehyde-3-phosphate dehydrogenase family. As to quaternary structure, homotetramer.

It localises to the cytoplasm. The enzyme catalyses D-glyceraldehyde 3-phosphate + phosphate + NAD(+) = (2R)-3-phospho-glyceroyl phosphate + NADH + H(+). Its pathway is carbohydrate degradation; glycolysis; pyruvate from D-glyceraldehyde 3-phosphate: step 1/5. This is Glyceraldehyde-3-phosphate dehydrogenase (gpd-1) from Neurospora crassa (strain ATCC 24698 / 74-OR23-1A / CBS 708.71 / DSM 1257 / FGSC 987).